Consider the following 300-residue polypeptide: 3-dehydrocarnitine:acetyl-CoA trimethylamine transferase (300 aa).

Zn(2+)-binding residues include histidine 51, histidine 53, and glutamate 254.

The protein belongs to the BKACE family. In terms of assembly, homotetramer. The cofactor is Zn(2+).

It carries out the reaction 3-dehydrocarnitine + acetyl-CoA = N,N,N-trimethylglycyl-CoA + acetoacetate. Its pathway is amine and polyamine metabolism; carnitine metabolism. In terms of biological role, catalyzes the condensation of dehydrocarnitine and acetyl-CoA, forming acetoacetate and betainyl-CoA (N,N,N-trimethylglycyl-CoA). Is involved in a L-carnitine degradation pathway that allows R.meliloti to grow on L-carnitine as the sole source of carbon and nitrogen. This is 3-dehydrocarnitine:acetyl-CoA trimethylamine transferase from Rhizobium meliloti (strain 1021) (Ensifer meliloti).